The primary structure comprises 261 residues: Uridine-cytidine kinase 2 (261 aa).

Residues 1 to 24 (MAGDSEQALPKHSPQNGQPFLIGV) are disordered. An ATP-binding site is contributed by 26-34 (GGTASGKSS). Substrate is bound by residues Asp-83, Tyr-111, His-116, Arg-165, Arg-175, and Gln-183. Residue Asp-212 coordinates ATP. A compositionally biased stretch (polar residues) spans 238-247 (NGYTNGFTSP). Positions 238-261 (NGYTNGFTSPRTRHPSDSNSSRPH) are disordered.

This sequence belongs to the uridine kinase family. Homotetramer.

It catalyses the reaction uridine + ATP = UMP + ADP + H(+). The catalysed reaction is cytidine + ATP = CMP + ADP + H(+). It functions in the pathway pyrimidine metabolism; CTP biosynthesis via salvage pathway; CTP from cytidine: step 1/3. The protein operates within pyrimidine metabolism; UMP biosynthesis via salvage pathway; UMP from uridine: step 1/1. Its function is as follows. Phosphorylates uridine and cytidine to uridine monophosphate and cytidine monophosphate. Does not phosphorylate deoxyribonucleosides or purine ribonucleosides. Can use ATP or GTP as a phosphate donor. This is Uridine-cytidine kinase 2 (uck2) from Xenopus tropicalis (Western clawed frog).